The following is a 388-amino-acid chain: Proteasomal ubiquitin receptor ADRM1 homolog rpn1302 (388 aa).

Residues 15-132 (RGKYGLVSVK…SLINQLIADP (118 aa)) enclose the Pru domain. Disordered regions lie at residues 202–227 (RASS…EEAT) and 368–388 (SDGE…EKDE). Residues 368-377 (SDGEVEEEGD) show a composition bias toward acidic residues. The segment covering 378–388 (VEMRESNEKDE) has biased composition (basic and acidic residues).

It belongs to the ADRM1 family. Component of the 19S proteasome regulatory particle complex. The 2 S.pombe rpn13 homologs, rpn1301 and rpn1302 are present at a 0.2-1 ratio.

It localises to the cytoplasm. The protein resides in the nucleus. Component of the 26S proteasome, a multiprotein complex involved in the ATP-dependent degradation of ubiquitinated proteins. This complex plays a key role in the maintenance of protein homeostasis by removing misfolded or damaged proteins, which could impair cellular functions, and by removing proteins whose functions are no longer required. Therefore, the proteasome participates in numerous cellular processes, including cell cycle progression, apoptosis, or DNA damage repair. Within the complex, functions as a proteasomal ubiquitin receptor. This chain is Proteasomal ubiquitin receptor ADRM1 homolog rpn1302 (rpn1302), found in Schizosaccharomyces pombe (strain 972 / ATCC 24843) (Fission yeast).